The primary structure comprises 209 residues: Uracil phosphoribosyltransferase (209 aa).

5-phospho-alpha-D-ribose 1-diphosphate-binding positions include arginine 79, arginine 104, and 131-139 (DPMLATGGS). Uracil-binding positions include isoleucine 194 and 199-201 (GDA). Aspartate 200 provides a ligand contact to 5-phospho-alpha-D-ribose 1-diphosphate.

Belongs to the UPRTase family. Mg(2+) serves as cofactor.

The enzyme catalyses UMP + diphosphate = 5-phospho-alpha-D-ribose 1-diphosphate + uracil. It participates in pyrimidine metabolism; UMP biosynthesis via salvage pathway; UMP from uracil: step 1/1. With respect to regulation, allosterically activated by GTP. Catalyzes the conversion of uracil and 5-phospho-alpha-D-ribose 1-diphosphate (PRPP) to UMP and diphosphate. The chain is Uracil phosphoribosyltransferase from Exiguobacterium sp. (strain ATCC BAA-1283 / AT1b).